We begin with the raw amino-acid sequence, 476 residues long: Bifunctional protein HldE (476 aa).

Residues 1 to 319 are ribokinase; it reads MAQYSAQFPH…NAIHGRTVSG (319 aa). 195–198 provides a ligand contact to ATP; it reads NMSE. Residue aspartate 264 is part of the active site. A cytidylyltransferase region spans residues 344-476; it reads MTNGCFDILH…VIKKIRDLKD (133 aa).

The protein in the N-terminal section; belongs to the carbohydrate kinase PfkB family. This sequence in the C-terminal section; belongs to the cytidylyltransferase family. In terms of assembly, homodimer.

The enzyme catalyses D-glycero-beta-D-manno-heptose 7-phosphate + ATP = D-glycero-beta-D-manno-heptose 1,7-bisphosphate + ADP + H(+). It carries out the reaction D-glycero-beta-D-manno-heptose 1-phosphate + ATP + H(+) = ADP-D-glycero-beta-D-manno-heptose + diphosphate. It participates in nucleotide-sugar biosynthesis; ADP-L-glycero-beta-D-manno-heptose biosynthesis; ADP-L-glycero-beta-D-manno-heptose from D-glycero-beta-D-manno-heptose 7-phosphate: step 1/4. The protein operates within nucleotide-sugar biosynthesis; ADP-L-glycero-beta-D-manno-heptose biosynthesis; ADP-L-glycero-beta-D-manno-heptose from D-glycero-beta-D-manno-heptose 7-phosphate: step 3/4. Catalyzes the phosphorylation of D-glycero-D-manno-heptose 7-phosphate at the C-1 position to selectively form D-glycero-beta-D-manno-heptose-1,7-bisphosphate. Functionally, catalyzes the ADP transfer from ATP to D-glycero-beta-D-manno-heptose 1-phosphate, yielding ADP-D-glycero-beta-D-manno-heptose. The protein is Bifunctional protein HldE of Actinobacillus succinogenes (strain ATCC 55618 / DSM 22257 / CCUG 43843 / 130Z).